The sequence spans 347 residues: Protein NDL3 (347 aa).

The protein belongs to the NDRG family. Interacts with the heterodimers formed by GB1 and GG1, or GB1 and GG2. Interacts with RGS1.

It localises to the cytoplasm. In terms of biological role, involved in a signaling pathway that modulates root auxin transport and auxin gradients. Acts partially by positively regulating the auxin carrier PIN2 and AUX1. Acts, together with GB1 as positive regulator of meristem initiation and branching. GB1 and NDL3 positively regulate basipetal inflorescence auxin transport and modulate MAX2 expression in shoots, which regulates organ and lateral meristem formation by the establishment and maintenance of auxin gradients. The polypeptide is Protein NDL3 (Arabidopsis thaliana (Mouse-ear cress)).